Reading from the N-terminus, the 612-residue chain is Elongation factor 4 (612 aa).

In terms of domain architecture, tr-type G spans 11–193; it reads KHIRNFSIVA…EIVKKVPAPN (183 aa). Residues 23 to 28 and 140 to 143 each bind GTP; these read DHGKST and NKID.

The protein belongs to the TRAFAC class translation factor GTPase superfamily. Classic translation factor GTPase family. LepA subfamily.

The protein resides in the cell membrane. It catalyses the reaction GTP + H2O = GDP + phosphate + H(+). Required for accurate and efficient protein synthesis under certain stress conditions. May act as a fidelity factor of the translation reaction, by catalyzing a one-codon backward translocation of tRNAs on improperly translocated ribosomes. Back-translocation proceeds from a post-translocation (POST) complex to a pre-translocation (PRE) complex, thus giving elongation factor G a second chance to translocate the tRNAs correctly. Binds to ribosomes in a GTP-dependent manner. The chain is Elongation factor 4 from Lactobacillus gasseri (strain ATCC 33323 / DSM 20243 / BCRC 14619 / CIP 102991 / JCM 1131 / KCTC 3163 / NCIMB 11718 / NCTC 13722 / AM63).